A 77-amino-acid chain; its full sequence is DNA-directed RNA polymerase subunit Rpo10 (77 aa).

Zn(2+)-binding residues include Cys7, Cys10, Cys44, and Cys45.

The protein belongs to the archaeal Rpo10/eukaryotic RPB10 RNA polymerase subunit family. In terms of assembly, part of the RNA polymerase complex. Zn(2+) serves as cofactor.

The protein localises to the cytoplasm. It catalyses the reaction RNA(n) + a ribonucleoside 5'-triphosphate = RNA(n+1) + diphosphate. Functionally, DNA-dependent RNA polymerase (RNAP) catalyzes the transcription of DNA into RNA using the four ribonucleoside triphosphates as substrates. In Aeropyrum pernix (strain ATCC 700893 / DSM 11879 / JCM 9820 / NBRC 100138 / K1), this protein is DNA-directed RNA polymerase subunit Rpo10.